A 376-amino-acid polypeptide reads, in one-letter code: WD repeat-containing protein 86 (376 aa).

WD repeat units lie at residues 13–52 (DHRG…CCAL), 55–94 (GHES…QVYR), 95–132 (GHTS…MSRE), 135–188 (GHRN…CHQT), 191–232 (GHTG…RVFR), 234–272 (HRGS…RTFT), 274–310 (HRRN…LRRV), and 313–350 (GHTF…GAPR).

The chain is WD repeat-containing protein 86 (WDR86) from Homo sapiens (Human).